The chain runs to 145 residues: Methylglyoxal synthase (145 aa).

The region spanning 1 to 145 is the MGS-like domain; it reads MNSKKKIALV…YYQKIRKDNF (145 aa). Residues His-12, Lys-16, 38-41, and 58-59 each bind substrate; these read TGTT and SG. Asp-64 serves as the catalytic Proton donor/acceptor. His-91 is a binding site for substrate.

Belongs to the methylglyoxal synthase family.

The catalysed reaction is dihydroxyacetone phosphate = methylglyoxal + phosphate. Functionally, catalyzes the formation of methylglyoxal from dihydroxyacetone phosphate. This Clostridium acetobutylicum (strain ATCC 824 / DSM 792 / JCM 1419 / IAM 19013 / LMG 5710 / NBRC 13948 / NRRL B-527 / VKM B-1787 / 2291 / W) protein is Methylglyoxal synthase.